Consider the following 374-residue polypeptide: Protein RecA (374 aa).

66 to 73 lines the ATP pocket; that stretch reads GPESSGKT. The interval 326-374 is disordered; sequence KLGVGVHPEESATEPGADAASAAPADAAPAVPAPTTAKATKSKATAAKS. The segment covering 338 to 374 has biased composition (low complexity); the sequence is TEPGADAASAAPADAAPAVPAPTTAKATKSKATAAKS.

This sequence belongs to the RecA family.

It localises to the cytoplasm. Functionally, can catalyze the hydrolysis of ATP in the presence of single-stranded DNA, the ATP-dependent uptake of single-stranded DNA by duplex DNA, and the ATP-dependent hybridization of homologous single-stranded DNAs. It interacts with LexA causing its activation and leading to its autocatalytic cleavage. This chain is Protein RecA, found in Streptomyces coelicolor (strain ATCC BAA-471 / A3(2) / M145).